Here is a 213-residue protein sequence, read N- to C-terminus: MITIALPKGALLSDSIELFKRIGLDFSSFLDSKNRQLQIIDPTNTAQGLLVRATDVPVYVEYGQAQLGIVGYDLLLEKSPDVAHLADLNFGGCRMSVAVPKTSPYQTPAELPPNGKVASKFVNCAKTYFQQLDLPVEIIPLYGSVELGPITGMSEAIVDLVSTGRTLKENGLVEVETLFHSTARLIAHPLSYRLNLDNLNDLSEQIKNSVSKS.

Belongs to the ATP phosphoribosyltransferase family. Short subfamily. Heteromultimer composed of HisG and HisZ subunits.

The protein resides in the cytoplasm. The catalysed reaction is 1-(5-phospho-beta-D-ribosyl)-ATP + diphosphate = 5-phospho-alpha-D-ribose 1-diphosphate + ATP. The protein operates within amino-acid biosynthesis; L-histidine biosynthesis; L-histidine from 5-phospho-alpha-D-ribose 1-diphosphate: step 1/9. Catalyzes the condensation of ATP and 5-phosphoribose 1-diphosphate to form N'-(5'-phosphoribosyl)-ATP (PR-ATP). Has a crucial role in the pathway because the rate of histidine biosynthesis seems to be controlled primarily by regulation of HisG enzymatic activity. This is ATP phosphoribosyltransferase from Crocosphaera subtropica (strain ATCC 51142 / BH68) (Cyanothece sp. (strain ATCC 51142)).